A 333-amino-acid chain; its full sequence is Flotillin-like protein FloA (333 aa).

The helical transmembrane segment at 9 to 29 threads the bilayer; it reads IVLIVGGIIFLILFFHYVPFF.

Belongs to the flotillin-like FloA family. As to quaternary structure, homooligomerizes.

The protein localises to the cell membrane. Its subcellular location is the membrane raft. Found in functional membrane microdomains (FMM) that may be equivalent to eukaryotic membrane rafts. FMMs are highly dynamic and increase in number as cells age. Flotillins are thought to be important factors in membrane fluidity. The protein is Flotillin-like protein FloA of Bacteroides thetaiotaomicron (strain ATCC 29148 / DSM 2079 / JCM 5827 / CCUG 10774 / NCTC 10582 / VPI-5482 / E50).